Consider the following 561-residue polypeptide: MNINVAELLNGNYILLLFVVLALGLCLGKLRLGSIQLGNSIGVLVVSLLLGQQHFSINTDALNLGFMLFIFCVGVEAGPNFFSIFFRDGKNYLMLALVMVGSALVIALGLGKLFGWDIGLTAGMLAGSMTSTPVLVGAGDTLRHFGMESRQLSLALDNLSLGYALTYLIGLVSLIVGARYLPKLQHQDLQTSAQQIARERGLDTDANRKVYLPVIRAYRVGPELVAWTDGKNLRELGIYRQTGCYIERIRRNGILANPDGDAVLQMGDEIALVGYPDAHARLDPSFRNGKEVFDRDLLDMRIVTEEVVVKNHNAVGKRLAQLKLTDHGCFLNRVIRSQIEMPIDDNVVLNKGDVLQVSGDARRVKTIADRIGFISIHSQVTDLLAFCAFFVIGLMIGMITFQFSTFSFGMGNAAGLLFAGIMLGFMRANHPTFGYIPQGALSMVKEFGLMVFMAGVGLSAGSGINNGLGAIGGQMLIAGLIVSLVPVVICFLFGAYVLRMNRALLFGAMMGARTCAPAMEIISDTARSNIPALGYAGTYAIANVLLTLAGTIIVMVWPGLG.

The next 5 helical transmembrane spans lie at 8–28 (LLNGNYILLLFVVLALGLCLG), 32–52 (LGSIQLGNSIGVLVVSLLLGQ), 66–86 (FMLFIFCVGVEAGPNFFSIFF), 94–114 (MLALVMVGSALVIALGLGKLF), and 158–178 (NLSLGYALTYLIGLVSLIVGA). RCK C-terminal domains are found at residues 200 to 288 (RGLD…SFRN) and 292 to 373 (VFDR…RIGF). A run of 5 helical transmembrane segments spans residues 383 to 403 (LLAFCAFFVIGLMIGMITFQF), 406 to 426 (FSFGMGNAAGLLFAGIMLGFM), 451 to 471 (VFMAGVGLSAGSGINNGLGAI), 475 to 495 (MLIAGLIVSLVPVVICFLFGA), and 540 to 560 (AIANVLLTLAGTIIVMVWPGL).

The protein belongs to the AAE transporter (TC 2.A.81) family. YbjL subfamily.

Its subcellular location is the cell membrane. The protein is Putative transport protein YbjL of Escherichia coli O139:H28 (strain E24377A / ETEC).